An 83-amino-acid polypeptide reads, in one-letter code: MKLSPKAAIEVCNEAAKKGLWILGIDGGHWLNPGFRIDSSASWTYDMPEEYKSKIPENNRLAIENIKDDIENGYTAFIITLKM.

In terms of biological role, this protein is able to protect a cell, which harbors the plasmid ColE5 encoding colicin E5, against colicin E5. The chain is Colicin-E5 immunity protein (imm) from Escherichia coli.